We begin with the raw amino-acid sequence, 144 residues long: Large ribosomal subunit protein uL16 (144 aa).

Basic residues predominate over residues 1 to 16 (MLTPKRVKHRKQHRGK). Positions 1-22 (MLTPKRVKHRKQHRGKMAGNAK) are disordered.

The protein belongs to the universal ribosomal protein uL16 family. Part of the 50S ribosomal subunit.

Its function is as follows. Binds 23S rRNA and is also seen to make contacts with the A and possibly P site tRNAs. The sequence is that of Large ribosomal subunit protein uL16 from Brevibacillus brevis (strain 47 / JCM 6285 / NBRC 100599).